An 80-amino-acid chain; its full sequence is Putative membrane protein insertion efficiency factor (80 aa).

This sequence belongs to the UPF0161 family.

The protein resides in the cell inner membrane. Could be involved in insertion of integral membrane proteins into the membrane. The chain is Putative membrane protein insertion efficiency factor from Kosmotoga olearia (strain ATCC BAA-1733 / DSM 21960 / TBF 19.5.1).